Here is a 529-residue protein sequence, read N- to C-terminus: Phosphoenolpyruvate carboxykinase (ATP) (529 aa).

Arg52 provides a ligand contact to substrate. Ca(2+) contacts are provided by Arg130, Asn131, and Phe133. Substrate contacts are provided by Tyr191 and Lys197. Residues Lys197, His216, and 232–240 (GLSGTGKTT) contribute to the ATP site. Residues Lys197 and His216 each contribute to the Mn(2+) site. Mn(2+) is bound at residue Asp253. Gly267 serves as a coordination point for Ca(2+). ATP-binding positions include Glu281, Arg319, 438-439 (RF), Phe439, and Thr444. Arg319 serves as a coordination point for substrate.

This sequence belongs to the phosphoenolpyruvate carboxykinase (ATP) family. As to quaternary structure, dimer of dimers. Requires Mn(2+) as cofactor.

Its subcellular location is the cytoplasm. It catalyses the reaction oxaloacetate + ATP = phosphoenolpyruvate + ADP + CO2. It participates in carbohydrate biosynthesis; gluconeogenesis. Allosterically activated by calcium. Involved in gluconeogenesis. Catalyzes the conversion of oxaloacetate (OAA) to phosphoenolpyruvate (PEP) through direct phosphoryl transfer between the nucleoside triphosphate and OAA. The polypeptide is Phosphoenolpyruvate carboxykinase (ATP) (Thermus thermophilus (strain ATCC 27634 / DSM 579 / HB8)).